A 215-amino-acid chain; its full sequence is MSKVYDWLEERLEIQAIADDITSKYVPPHVNIFYCLGGITLTCFLVQVATGFAMTFYYRPTVTEAFASVKYIMTEANFGWLIRSVHRWSASMMVLMMILHVFRVYLTGGFKKPRELTWVTGVVLAVLTASFGVTGYSLPWDQIGYWAVKIVTGVPEAIPLIGSPLVELLRGSASVGQSTLTRFYSLHTFVLPLITAVFMLMHFLMIRKQGISGPL.

The chain crosses the membrane as a helical span at residues 32–52; the sequence is IFYCLGGITLTCFLVQVATGF. C35 lines the heme c pocket. Heme b contacts are provided by H86 and H100. A run of 3 helical transmembrane segments spans residues 90–110, 116–136, and 186–206; these read ASMMVLMMILHVFRVYLTGGF, LTWVTGVVLAVLTASFGVTGY, and LHTFVLPLITAVFMLMHFLMI. The heme b site is built by H187 and H202.

It belongs to the cytochrome b family. PetB subfamily. The 4 large subunits of the cytochrome b6-f complex are cytochrome b6, subunit IV (17 kDa polypeptide, PetD), cytochrome f and the Rieske protein, while the 4 small subunits are PetG, PetL, PetM and PetN. The complex functions as a dimer. Heme b is required as a cofactor. Requires heme c as cofactor.

Its subcellular location is the plastid thylakoid membrane. Component of the cytochrome b6-f complex, which mediates electron transfer between photosystem II (PSII) and photosystem I (PSI), cyclic electron flow around PSI, and state transitions. The chain is Cytochrome b6 (petB) from Cuscuta reflexa (Southern Asian dodder).